Consider the following 309-residue polypeptide: Taste receptor type 2 member 113 (309 aa).

At 1–8 (MVAVLQST) the chain is on the extracellular side. A helical transmembrane segment spans residues 9–29 (FAIIFSMEFIVGTLGNGFIIL). Residues 30-55 (MTCIDWVRRRKISLVDQILTALAITR) lie on the Cytoplasmic side of the membrane. A helical membrane pass occupies residues 56 to 76 (ITLILLVFIDWWVSVLFPALH). At 77-101 (ETGKILRMYFISWTVINHCNLWLTA) the chain is on the extracellular side. Residues 102–122 (SLSIIYFLKIASFSSIIFLYL) form a helical membrane-spanning segment. Residues 123–127 (KFRVK) are Cytoplasmic-facing. A helical membrane pass occupies residues 128-148 (NVVFVTLLVSLFFLFINTAIV). Over 149–185 (NVYFDVCFDGVQRNVSQVSRLYNHEQICKFLSFTNPM) the chain is Extracellular. N-linked (GlcNAc...) asparagine glycosylation is present at Asn-162. A helical transmembrane segment spans residues 186–206 (FAFIPFVTSMATFFLLIFSLW). At 207–229 (RHLKNMKHNAEGCRDVSTIVHIR) the chain is on the cytoplasmic side. The helical transmembrane segment at 230–250 (ALQTIIVSVVLYSTFFLSFFV) threads the bilayer. Over 251–262 (KVWSSGSPERYL) the chain is Extracellular. The helical transmembrane segment at 263-283 (IFLFVWALGNAVLPAHTFVLI) threads the bilayer. At 284 to 309 (WGNCRLRWASLSLMLWLRYRFKNIDV) the chain is on the cytoplasmic side.

Belongs to the G-protein coupled receptor T2R family.

It localises to the membrane. In terms of biological role, putative taste receptor which may play a role in the perception of bitterness. The chain is Taste receptor type 2 member 113 from Rattus norvegicus (Rat).